The primary structure comprises 1140 residues: Centrosomal protein of 135 kDa (1140 aa).

The homodimerization stretch occupies residues 11–64; sequence NIRKRLDQLGYRQTLTVECLPLVEKLFSDLVHTTESLRQSKLSAVKAEKESANF. Coiled coils occupy residues 75–151 and 199–416; these read NARL…KNLH and LQVA…FAVT. Residues S383 and S439 each carry the phosphoserine modification. Coiled-coil stretches lie at residues 447–644, 668–1036, and 1079–1113; these read LKGI…LENK, SLRI…LESL, and NTML…AIQE. S688 carries the phosphoserine modification. The interval 1114–1140 is disordered; the sequence is MRRHGLATPPLSSTLRSPSHSPEHRNV. T1121 is subject to Phosphothreonine. The span at 1121–1133 shows a compositional bias: low complexity; the sequence is TPPLSSTLRSPSH. S1130 bears the Phosphoserine mark.

Belongs to the CEP135/TSGA10 family. Homodimer. Interacts with DCTN2. Interacts with CEP250.

Its subcellular location is the cytoplasm. The protein resides in the cytoskeleton. It localises to the microtubule organizing center. It is found in the centrosome. The protein localises to the centriole. Functionally, centrosomal microtubule-binding protein involved in centriole biogenesis. Acts as a scaffolding protein during early centriole biogenesis. Required for the targeting of centriole satellite proteins to centrosomes such as of PCM1, SSX2IP and CEP290 and recruitment of WRAP73 to centrioles. Also required for centriole-centriole cohesion during interphase by acting as a platform protein for CEP250 at the centriole. Required for the recruitment of CEP295 to the proximal end of new-born centrioles at the centriolar microtubule wall during early S phase in a PLK4-dependent manner. The protein is Centrosomal protein of 135 kDa of Homo sapiens (Human).